A 389-amino-acid chain; its full sequence is Ethanolamine-phosphate cytidylyltransferase (389 aa).

CTP is bound by residues 221–222 (AF), 229–232 (HVDF), Lys259, 307–310 (HGKT), and 336–340 (SGNDL). Phosphothreonine occurs at positions 341 and 342.

Belongs to the cytidylyltransferase family.

It carries out the reaction phosphoethanolamine + CTP + H(+) = CDP-ethanolamine + diphosphate. The protein operates within phospholipid metabolism; phosphatidylethanolamine biosynthesis; phosphatidylethanolamine from ethanolamine: step 2/3. Functionally, ethanolamine-phosphate cytidylyltransferase that catalyzes the second step in the synthesis of phosphatidylethanolamine (PE) from ethanolamine via the CDP-ethanolamine pathway. Phosphatidylethanolamine is a dominant inner-leaflet phospholipid in cell membranes, where it plays a role in membrane function by structurally stabilizing membrane-anchored proteins, and participates in important cellular processes such as cell division, cell fusion, blood coagulation, and apoptosis. This is Ethanolamine-phosphate cytidylyltransferase (PCYT2) from Bos taurus (Bovine).